The primary structure comprises 253 residues: Transcriptional regulatory protein TcrA (253 aa).

The Response regulatory domain maps to 24 to 138 (RILVVEDEPK…ELFARLRALS (115 aa)). Residue D73 is modified to 4-aspartylphosphate. A DNA-binding region (ompR/PhoB-type) is located at residues 146–244 (PPTLEAGDLR…IRGAGYRLRK (99 aa)).

As to quaternary structure, interacts with HK2. Phosphorylated by HK2.

Its subcellular location is the cytoplasm. Member of the three-protein two-component system HK1/HK2/TcrA. This Mycobacterium tuberculosis (strain ATCC 25618 / H37Rv) protein is Transcriptional regulatory protein TcrA (tcrA).